The sequence spans 500 residues: ERAD-associated E3 ubiquitin-protein ligase HRD1 (500 aa).

Residues 1–3 (MIR) are Cytoplasmic-facing. A helical transmembrane segment spans residues 4-24 (LQTYAAFSLMATATAVYYAFS). Residues 25 to 40 (SREQFYPAMVYLSTSK) are Lumenal-facing. Residues 41 to 61 (ICFVLLLNTGLVAMCVAWQLV) form a helical membrane-spanning segment. Over 62-98 (KRLFLGTLREAEVERLNEQAWREVVEILFAVTIFRQD) the chain is Cytoplasmic. Residues 99–119 (FSVSFLAMVAALLLVKALHWL) traverse the membrane as a helical segment. At 120 to 135 (AQKRVEYIETTPSVPM) the chain is on the lumenal side. The chain crosses the membrane as a helical span at residues 136 to 156 (LSHARIVSFMLFLLVVDCLFL). Residues 157-170 (SNSLRSLIHKREAS) lie on the Cytoplasmic side of the membrane. A helical membrane pass occupies residues 171-191 (VAIFFSFEYMILATSTVSTFV). Topologically, residues 192-225 (KYIFYVSDMLMEGQWEKKAVYTFYLELISDLVHL) are lumenal. Residues 226–246 (SLYMLFFIAIFLNYGVPLHLI) form a helical membrane-spanning segment. Residues 247 to 500 (RELYETFRNF…NENGEHTKSD (254 aa)) lie on the Cytoplasmic side of the membrane. The RING-type; atypical zinc-finger motif lies at 292 to 330 (CIICREEMTTAKKLLCGHLFHVHCLRSWLERQHTCPTCR). Disordered stretches follow at residues 337–375 (DNGR…SRRQ) and 398–438 (NNLN…SAPT). Low complexity predominate over residues 348–358 (VHPGVQPVPGN). Over residues 398–426 (NNLNRYSTPPQSTSNGPQSGEASTSNQSP) the composition is skewed to polar residues.

Belongs to the HRD1 family.

It localises to the endoplasmic reticulum membrane. It catalyses the reaction S-ubiquitinyl-[E2 ubiquitin-conjugating enzyme]-L-cysteine + [acceptor protein]-L-lysine = [E2 ubiquitin-conjugating enzyme]-L-cysteine + N(6)-ubiquitinyl-[acceptor protein]-L-lysine.. It participates in protein modification; protein ubiquitination. Its function is as follows. Probable component of the HRD1 ubiquitin ligase complex that mediates the rapid degradation of misfolded endoplasmic reticulum (ER) proteins, a process called ER-associated degradation (ERAD). This Oryza sativa subsp. japonica (Rice) protein is ERAD-associated E3 ubiquitin-protein ligase HRD1.